Reading from the N-terminus, the 360-residue chain is Histidinol-phosphate aminotransferase 2 (360 aa).

N6-(pyridoxal phosphate)lysine is present on Lys218.

It belongs to the class-II pyridoxal-phosphate-dependent aminotransferase family. Histidinol-phosphate aminotransferase subfamily. As to quaternary structure, homodimer. Requires pyridoxal 5'-phosphate as cofactor.

It catalyses the reaction L-histidinol phosphate + 2-oxoglutarate = 3-(imidazol-4-yl)-2-oxopropyl phosphate + L-glutamate. It participates in amino-acid biosynthesis; L-histidine biosynthesis; L-histidine from 5-phospho-alpha-D-ribose 1-diphosphate: step 7/9. This chain is Histidinol-phosphate aminotransferase 2, found in Nitrosococcus oceani (strain ATCC 19707 / BCRC 17464 / JCM 30415 / NCIMB 11848 / C-107).